A 71-amino-acid polypeptide reads, in one-letter code: Putative membrane protein insertion efficiency factor (71 aa).

Belongs to the UPF0161 family.

It localises to the cell membrane. Functionally, could be involved in insertion of integral membrane proteins into the membrane. This chain is Putative membrane protein insertion efficiency factor, found in Desulforudis audaxviator (strain MP104C).